The sequence spans 334 residues: N-acetyl-gamma-glutamyl-phosphate reductase (334 aa).

Cys-149 is an active-site residue.

The protein belongs to the NAGSA dehydrogenase family. Type 1 subfamily.

Its subcellular location is the cytoplasm. The enzyme catalyses N-acetyl-L-glutamate 5-semialdehyde + phosphate + NADP(+) = N-acetyl-L-glutamyl 5-phosphate + NADPH + H(+). Its pathway is amino-acid biosynthesis; L-arginine biosynthesis; N(2)-acetyl-L-ornithine from L-glutamate: step 3/4. Catalyzes the NADPH-dependent reduction of N-acetyl-5-glutamyl phosphate to yield N-acetyl-L-glutamate 5-semialdehyde. This is N-acetyl-gamma-glutamyl-phosphate reductase from Sulfurimonas denitrificans (strain ATCC 33889 / DSM 1251) (Thiomicrospira denitrificans (strain ATCC 33889 / DSM 1251)).